A 305-amino-acid polypeptide reads, in one-letter code: Ribonuclease BN (305 aa).

Residues His-63, His-65, Asp-67, His-68, His-141, Asp-212, and His-270 each contribute to the Zn(2+) site. The Proton acceptor role is filled by Asp-67.

This sequence belongs to the RNase Z family. RNase BN subfamily. As to quaternary structure, homodimer. Requires Zn(2+) as cofactor.

Functionally, zinc phosphodiesterase, which has both exoribonuclease and endoribonuclease activities. The protein is Ribonuclease BN of Proteus mirabilis (strain HI4320).